Reading from the N-terminus, the 228-residue chain is Casparian strip membrane protein 2 (228 aa).

Over 1–65 (MSTSDAAATV…FRRADRGSRC (65 aa)) the chain is Cytoplasmic. A helical membrane pass occupies residues 66–86 (VALLDLVLRVAAFGPALAAAI). Residues 87-113 (ATGTSDETLSVFTQFFQFHARFDDFPA) are Extracellular-facing. Residues 114-134 (LLFFMVANAIAAGYLVLSLPF) traverse the membrane as a helical segment. Over 135 to 149 (SAVVVLRPQAIGLRH) the chain is Cytoplasmic. The chain crosses the membrane as a helical span at residues 150 to 170 (LLLICDLIIAALLTAAAAAAA). Over 171–201 (AIVDLAHSGNQRANWVPICMQFHGFCQRTSG) the chain is Extracellular. A helical transmembrane segment spans residues 202–222 (AVVASFLAVLVLLFLVILAAF). Topologically, residues 223 to 228 (TIRKRC) are cytoplasmic.

Belongs to the Casparian strip membrane proteins (CASP) family. As to quaternary structure, homodimer and heterodimers.

The protein resides in the cell membrane. Its function is as follows. Regulates membrane-cell wall junctions and localized cell wall deposition. Required for establishment of the Casparian strip membrane domain (CSD) and the subsequent formation of Casparian strips, a cell wall modification of the root endodermis that determines an apoplastic barrier between the intraorganismal apoplasm and the extraorganismal apoplasm and prevents lateral diffusion. The polypeptide is Casparian strip membrane protein 2 (Zea mays (Maize)).